The primary structure comprises 130 residues: Small ribosomal subunit protein bS16 (130 aa).

The span at 98-109 (AAAKQAAKDAAE) shows a compositional bias: basic and acidic residues. Residues 98–130 (AAAKQAAKDAAEAKAAAAAEAEAPAADAEASEG) are disordered. Residues 110 to 130 (AKAAAAAEAEAPAADAEASEG) show a composition bias toward low complexity.

Belongs to the bacterial ribosomal protein bS16 family.

The polypeptide is Small ribosomal subunit protein bS16 (Synechococcus sp. (strain CC9902)).